The sequence spans 3305 residues: Apolipophorins (3305 aa).

The N-terminal stretch at 1-23 (MGKSNRLLSVLFVISVLWKAAYG) is a signal peptide. The Vitellogenin domain maps to 39–640 (FAAGQKYNYG…SQTSFLPRSV (602 aa)). N-linked (GlcNAc...) asparagine glycans are attached at residues N643 and N2769. The VWFD domain occupies 2733 to 2899 (LRAVVVNGQH…NSYRLSRSCP (167 aa)). Cysteines 2757 and 2898 form a disulfide.

In terms of processing, cleaved into 2 chains by furin protease. However, prevention of cleavage does not impair its function. Post-translationally, N-glycosylated.

It localises to the secreted. In terms of biological role, constitutes the major component of lipophorin, which mediates transport for various types of lipids in hemolymph. Acts by forming lipoprotein particles that bind lipoproteins and lipids. May be required for morphogens wingless (wg) and hedgehog (hh) function, possibly by acting as vehicles for the movement of wg and hh. The polypeptide is Apolipophorins (Manduca sexta (Tobacco hawkmoth)).